A 437-amino-acid polypeptide reads, in one-letter code: Glutamate-1-semialdehyde 2,1-aminomutase (437 aa).

An N6-(pyridoxal phosphate)lysine modification is found at K279.

It belongs to the class-III pyridoxal-phosphate-dependent aminotransferase family. HemL subfamily. In terms of assembly, homodimer. Pyridoxal 5'-phosphate is required as a cofactor.

The protein resides in the cytoplasm. It carries out the reaction (S)-4-amino-5-oxopentanoate = 5-aminolevulinate. It participates in porphyrin-containing compound metabolism; protoporphyrin-IX biosynthesis; 5-aminolevulinate from L-glutamyl-tRNA(Glu): step 2/2. The polypeptide is Glutamate-1-semialdehyde 2,1-aminomutase (Sorangium cellulosum (strain So ce56) (Polyangium cellulosum (strain So ce56))).